Consider the following 419-residue polypeptide: UDP-N-acetylglucosamine 1-carboxyvinyltransferase (419 aa).

Residue 22 to 23 (KN) participates in phosphoenolpyruvate binding. Arginine 95 contributes to the UDP-N-acetyl-alpha-D-glucosamine binding site. Residue cysteine 119 is the Proton donor of the active site. A 2-(S-cysteinyl)pyruvic acid O-phosphothioketal modification is found at cysteine 119. Residues 164-167 (KVSV), aspartate 308, and isoleucine 330 each bind UDP-N-acetyl-alpha-D-glucosamine.

This sequence belongs to the EPSP synthase family. MurA subfamily.

It is found in the cytoplasm. The catalysed reaction is phosphoenolpyruvate + UDP-N-acetyl-alpha-D-glucosamine = UDP-N-acetyl-3-O-(1-carboxyvinyl)-alpha-D-glucosamine + phosphate. It functions in the pathway cell wall biogenesis; peptidoglycan biosynthesis. Its function is as follows. Cell wall formation. Adds enolpyruvyl to UDP-N-acetylglucosamine. This Rickettsia rickettsii (strain Iowa) protein is UDP-N-acetylglucosamine 1-carboxyvinyltransferase.